The primary structure comprises 298 residues: Homoserine kinase (298 aa).

83–93 (PVSRGLGSSST) is an ATP binding site.

It belongs to the GHMP kinase family. Homoserine kinase subfamily.

The protein resides in the cytoplasm. It catalyses the reaction L-homoserine + ATP = O-phospho-L-homoserine + ADP + H(+). Its pathway is amino-acid biosynthesis; L-threonine biosynthesis; L-threonine from L-aspartate: step 4/5. Functionally, catalyzes the ATP-dependent phosphorylation of L-homoserine to L-homoserine phosphate. The chain is Homoserine kinase from Clostridium beijerinckii (strain ATCC 51743 / NCIMB 8052) (Clostridium acetobutylicum).